The primary structure comprises 976 residues: MAKDLNDSGFPPKRKPLLRPQRSDFTANSSTTMNVNANTRGRGRQKQEGGKGSSRSPSLHSPKSWIRSASATGILGLRRPELAHSHSHAPSTGTPAGGNRSPLRRSTANATPVETGRSLTDGDINNVVDVLPSFEMYNTLHRHIPQGNVDPDRHDFPPSYQEANNSTATGAAGSSADLSHQSLSTDALGATRSSSTSNLENLIPLRTEHHSIAAHQSTAVDEDSLDIPPILDDLNDTDNIFIDKLYTLPKMSTPIEITIKTTKHAPIPHVKPEEESILKEYTSGDLIHGFITIENKSQANLKFEMFYVTLESYISIIDKVKSKRTIKRFLRMVDLSASWSYSKIALGSGVDFIPADVDYDGSVFGLNNSRVLEPGVKYKKFFIFKLPLQLLDVTCKQEHFSHCLLPPSFGIDKYRNNCKYSGIKVNRVLGCGHLGTKGSPILTNDMSDDNLSINYTIDARIVGKDQKASKLYIMKEREYNLRVIPFGFDANVVGERTTMSQLNDITKLVQERLDALRKIFQRLEKKEPITNRDIHGADLSGTIDDSIESDSQEILQRKLDQLHIKNRNNYLVNYNDLKLGHDLDNGRSGNSGHNTDTSRAWGPFVESELKYKLKNKSNSSSFLNFSHFLNSSSSSMSSSSNAGKNNHDLTGNKERTGLILVKAKIPKQGLPYWAPSLLRKTNVFESKSKHDQENWVRLSELIPEDVKKPLEKLDLQLTCIESDNSLPHDPPEIQSITTELICITAKSDNSIPIKLNSELLMNKEKLTSIKALYDDFHSKICEYETKFNKNFLELNELYNMNRGDRRPKELKFTDFITSQLFNDIESICNLKVSVHNLSNIFKKQVSTLKQHSKHALSEDSISHTGNGSSSSPSSASLTPVTSSSKSSLFLPSGSSSTSLKFTDQIVHKWVRIAPLQYKRDINVNLEFNKDIKETLIPSFESCLCCRFYCVRVMIKFENHLGVAKIDIPISVRQVTK.

Residues 1 to 65 (MAKDLNDSGF…SPSLHSPKSW (65 aa)) are disordered. Over residues 23–39 (SDFTANSSTTMNVNANT) the composition is skewed to polar residues. Low complexity predominate over residues 53 to 64 (SSRSPSLHSPKS). S58 and S70 each carry phosphoserine. Disordered stretches follow at residues 82–124 (LAHS…DGDI), 145–196 (PQGN…SSST), and 857–878 (SEDSISHTGNGSSSSPSSASLT). The PY-motif signature appears at 156-160 (FPPSY). The span at 163 to 176 (ANNSTATGAAGSSA) shows a compositional bias: low complexity. The span at 177–196 (DLSHQSLSTDALGATRSSST) shows a compositional bias: polar residues. Residues 862 to 878 (SHTGNGSSSSPSSASLT) are compositionally biased toward low complexity.

Belongs to the BUL1 family. Component of the RSP5-BUL1/2 ubiquitin ligase complex composed of at least RSP5 and BUL1 or BUL2.

The protein localises to the cytoplasm. It functions in the pathway protein modification; protein ubiquitination. Component of a RSP5 ubiquitin ligase complex which specifies polyubiquitination and intracellular trafficking of the general amino acid permease GAP1 as well as other permeases such as PMA1. The RSP5-BUL1/2 complex is also necessary for the heat-shock element (HSE)-mediated gene expression, nitrogen starvation GLN3-dependent transcription and pressure-induced differential regulation of the 2 tryptophan permeases TAT1 and TAT2. The polypeptide is Ubiquitin ligase-binding protein BUL1 (BUL1) (Saccharomyces cerevisiae (strain ATCC 204508 / S288c) (Baker's yeast)).